Reading from the N-terminus, the 196-residue chain is MSSTLPDPHLDQLFVQARTHNAWTSKPVTDDTIHALYDLLKWAPTAANSNPGRFVFVRSAEAKARLLKSVAPGNVDKVKAAPCCVIVAYDTEFHDLLPQLFPARDMRSGFVGKPELITETAKRNSALQGAYLILAARALGLDAGPMSGFDHVALDAEFFPDGRWKSNFLCNIGYGDAEKLFPRNPRLAFEDACRVL.

The protein belongs to the nitroreductase family. HadB/RutE subfamily. It depends on FMN as a cofactor.

This Rhodopseudomonas palustris (strain TIE-1) protein is Putative NADH dehydrogenase/NAD(P)H nitroreductase Rpal_4764.